The sequence spans 93 residues: Integration host factor subunit beta (93 aa).

Belongs to the bacterial histone-like protein family. In terms of assembly, heterodimer of an alpha and a beta chain.

Functionally, this protein is one of the two subunits of integration host factor, a specific DNA-binding protein that functions in genetic recombination as well as in transcriptional and translational control. The chain is Integration host factor subunit beta from Rhodospirillum centenum (strain ATCC 51521 / SW).